A 666-amino-acid chain; its full sequence is Probable potassium transport system protein Kup (666 aa).

The next 12 membrane-spanning stretches (helical) occupy residues Gly16–Met36, Ile58–Leu78, Pro100–Thr120, Ile149–Phe169, Ile173–Met193, Ile221–Leu241, Trp253–Ala273, Val294–Gly314, Leu343–Phe363, Tyr373–Ile393, Pro399–Ala419, and Phe424–Ile444.

It belongs to the HAK/KUP transporter (TC 2.A.72) family.

The protein localises to the cell membrane. It catalyses the reaction K(+)(in) + H(+)(in) = K(+)(out) + H(+)(out). Transport of potassium into the cell. Likely operates as a K(+):H(+) symporter. This Streptococcus pyogenes serotype M3 (strain ATCC BAA-595 / MGAS315) protein is Probable potassium transport system protein Kup.